A 133-amino-acid chain; its full sequence is Large ribosomal subunit protein uL22 (133 aa).

It belongs to the universal ribosomal protein uL22 family. In terms of assembly, part of the 50S ribosomal subunit.

Its function is as follows. This protein binds specifically to 23S rRNA; its binding is stimulated by other ribosomal proteins, e.g. L4, L17, and L20. It is important during the early stages of 50S assembly. It makes multiple contacts with different domains of the 23S rRNA in the assembled 50S subunit and ribosome. Functionally, the globular domain of the protein is located near the polypeptide exit tunnel on the outside of the subunit, while an extended beta-hairpin is found that lines the wall of the exit tunnel in the center of the 70S ribosome. This Granulibacter bethesdensis (strain ATCC BAA-1260 / CGDNIH1) protein is Large ribosomal subunit protein uL22.